Consider the following 420-residue polypeptide: Protein translocase subunit SecY (420 aa).

The next 10 membrane-spanning stretches (helical) occupy residues 9 to 29, 61 to 81, 104 to 124, 141 to 161, 173 to 193, 203 to 223, 257 to 277, 300 to 320, 355 to 375, and 377 to 397; these read ILIT…PIPG, LSII…MELL, IVRY…SVGL, VFMI…MWIG, ISLI…SGTF, ILML…IIYV, LSGV…STIL, YNIL…SIVF, KLTL…WILV, and AMGV…QVAI.

This sequence belongs to the SecY/SEC61-alpha family. As to quaternary structure, component of the Sec protein translocase complex. Heterotrimer consisting of SecY, SecE and SecG subunits. The heterotrimers can form oligomers, although 1 heterotrimer is thought to be able to translocate proteins. Interacts with the ribosome. Interacts with SecDF, and other proteins may be involved. Interacts with SecA.

The protein resides in the cell inner membrane. The central subunit of the protein translocation channel SecYEG. Consists of two halves formed by TMs 1-5 and 6-10. These two domains form a lateral gate at the front which open onto the bilayer between TMs 2 and 7, and are clamped together by SecE at the back. The channel is closed by both a pore ring composed of hydrophobic SecY resides and a short helix (helix 2A) on the extracellular side of the membrane which forms a plug. The plug probably moves laterally to allow the channel to open. The ring and the pore may move independently. The chain is Protein translocase subunit SecY from Helicobacter pylori (strain J99 / ATCC 700824) (Campylobacter pylori J99).